The sequence spans 181 residues: ATP synthase subunit delta (181 aa).

It belongs to the ATPase delta chain family. In terms of assembly, F-type ATPases have 2 components, F(1) - the catalytic core - and F(0) - the membrane proton channel. F(1) has five subunits: alpha(3), beta(3), gamma(1), delta(1), epsilon(1). F(0) has three main subunits: a(1), b(2) and c(10-14). The alpha and beta chains form an alternating ring which encloses part of the gamma chain. F(1) is attached to F(0) by a central stalk formed by the gamma and epsilon chains, while a peripheral stalk is formed by the delta and b chains.

The protein resides in the cell inner membrane. F(1)F(0) ATP synthase produces ATP from ADP in the presence of a proton or sodium gradient. F-type ATPases consist of two structural domains, F(1) containing the extramembraneous catalytic core and F(0) containing the membrane proton channel, linked together by a central stalk and a peripheral stalk. During catalysis, ATP synthesis in the catalytic domain of F(1) is coupled via a rotary mechanism of the central stalk subunits to proton translocation. Functionally, this protein is part of the stalk that links CF(0) to CF(1). It either transmits conformational changes from CF(0) to CF(1) or is implicated in proton conduction. The sequence is that of ATP synthase subunit delta from Hyphomonas neptunium (strain ATCC 15444).